We begin with the raw amino-acid sequence, 76 residues long: Large ribosomal subunit protein uL29 (76 aa).

This sequence belongs to the universal ribosomal protein uL29 family.

The sequence is that of Large ribosomal subunit protein uL29 from Corynebacterium diphtheriae (strain ATCC 700971 / NCTC 13129 / Biotype gravis).